The following is a 430-amino-acid chain: 3-phosphoshikimate 1-carboxyvinyltransferase (430 aa).

Residues lysine 23, serine 24, and arginine 28 each coordinate 3-phosphoshikimate. Lysine 23 serves as a coordination point for phosphoenolpyruvate. Phosphoenolpyruvate contacts are provided by glycine 95 and arginine 123. 4 residues coordinate 3-phosphoshikimate: serine 169, glutamine 171, aspartate 315, and lysine 342. Glutamine 171 lines the phosphoenolpyruvate pocket. Aspartate 315 serves as the catalytic Proton acceptor. Arginine 346 and arginine 388 together coordinate phosphoenolpyruvate.

Belongs to the EPSP synthase family. Monomer.

The protein resides in the cytoplasm. The catalysed reaction is 3-phosphoshikimate + phosphoenolpyruvate = 5-O-(1-carboxyvinyl)-3-phosphoshikimate + phosphate. It functions in the pathway metabolic intermediate biosynthesis; chorismate biosynthesis; chorismate from D-erythrose 4-phosphate and phosphoenolpyruvate: step 6/7. Catalyzes the transfer of the enolpyruvyl moiety of phosphoenolpyruvate (PEP) to the 5-hydroxyl of shikimate-3-phosphate (S3P) to produce enolpyruvyl shikimate-3-phosphate and inorganic phosphate. This is 3-phosphoshikimate 1-carboxyvinyltransferase from Streptococcus pyogenes serotype M6 (strain ATCC BAA-946 / MGAS10394).